Reading from the N-terminus, the 370-residue chain is Quinolinate synthase (370 aa).

His62 and Ser83 together coordinate iminosuccinate. Cys128 serves as a coordination point for [4Fe-4S] cluster. Residues 154–156 (YAN) and Ser171 contribute to the iminosuccinate site. Cys215 contributes to the [4Fe-4S] cluster binding site. Residues 241 to 243 (HPE) and Thr258 contribute to the iminosuccinate site. Cys312 serves as a coordination point for [4Fe-4S] cluster.

Belongs to the quinolinate synthase family. Type 1 subfamily. The cofactor is [4Fe-4S] cluster.

It localises to the cytoplasm. The catalysed reaction is iminosuccinate + dihydroxyacetone phosphate = quinolinate + phosphate + 2 H2O + H(+). It participates in cofactor biosynthesis; NAD(+) biosynthesis; quinolinate from iminoaspartate: step 1/1. Functionally, catalyzes the condensation of iminoaspartate with dihydroxyacetone phosphate to form quinolinate. This is Quinolinate synthase from Neisseria meningitidis serogroup B (strain ATCC BAA-335 / MC58).